Here is an 872-residue protein sequence, read N- to C-terminus: G-type lectin S-receptor-like serine/threonine-protein kinase At5g35370 (872 aa).

Positions 1-26 (MKSTFLLLLLLLSLNLLFVFVSCASS) are cleaved as a signal peptide. The Extracellular portion of the chain corresponds to 27 to 443 (IEFVYPNFTA…NNNRGGSSFP (417 aa)). N-linked (GlcNAc...) asparagine glycosylation is found at asparagine 33, asparagine 148, and asparagine 239. Residues 35–156 (TASNLRFVDS…LNVSLWESFD (122 aa)) form the Bulb-type lectin domain. The EGF-like; atypical domain maps to 283 to 322 (PMDSCQIPFVCGKLGLCNLDNASENQSCSCPDEMRMDAGK). Intrachain disulfides connect cysteine 287–cysteine 299 and cysteine 293–cysteine 310. N-linked (GlcNAc...) asparagine glycosylation is found at asparagine 303, asparagine 307, asparagine 342, asparagine 379, and asparagine 389. The 86-residue stretch at 338-423 (CEARNISYLE…HDLIGYVKLS (86 aa)) folds into the PAN domain. 2 cysteine pairs are disulfide-bonded: cysteine 372/cysteine 394 and cysteine 376/cysteine 382. The helical transmembrane segment at 444–464 (VIALVLLPCSGFFLLIALGLL) threads the bilayer. Residues 465 to 872 (WWRRCAVMRY…IASQEVSGPR (408 aa)) lie on the Cytoplasmic side of the membrane. The 300-residue stretch at 515–814 (ENFKMQIGSG…GSIPLGNPRM (300 aa)) folds into the Protein kinase domain. ATP is bound by residues 521–529 (IGSGGFGSV) and lysine 543. The caM-binding stretch occupies residues 603–620 (GNGPVLEWQERFDIALGT). Aspartate 639 (proton acceptor) is an active-site residue. The residue at position 656 (serine 656) is a Phosphoserine. At threonine 673 the chain carries Phosphothreonine. Phosphoserine occurs at positions 716 and 859. The disordered stretch occupies residues 836–872 (QNGESETMVFHRRESSNSGGSRQSASYIASQEVSGPR). The span at 851–861 (SNSGGSRQSAS) shows a compositional bias: low complexity. The span at 862 to 872 (YIASQEVSGPR) shows a compositional bias: polar residues.

The protein belongs to the protein kinase superfamily. Ser/Thr protein kinase family.

Its subcellular location is the cell membrane. The catalysed reaction is L-seryl-[protein] + ATP = O-phospho-L-seryl-[protein] + ADP + H(+). It carries out the reaction L-threonyl-[protein] + ATP = O-phospho-L-threonyl-[protein] + ADP + H(+). This chain is G-type lectin S-receptor-like serine/threonine-protein kinase At5g35370, found in Arabidopsis thaliana (Mouse-ear cress).